A 626-amino-acid polypeptide reads, in one-letter code: Polyphenol oxidase C, chloroplastic (626 aa).

The transit peptide at 1 to 83 directs the protein to the chloroplast; it reads MASLCSNSST…ANAIPLAASA (83 aa). Disulfide bonds link C94–C110 and C109–C177. Cu cation-binding residues include H176, H194, H203, H324, H328, and H366. Residues 180–194 constitute a cross-link (2'-(S-cysteinyl)-histidine (Cys-His)); sequence CNGGYSIDGKVLQVH.

This sequence belongs to the tyrosinase family. The cofactor is Cu(2+).

It is found in the plastid. The protein resides in the chloroplast thylakoid lumen. It catalyses the reaction 2 catechol + O2 = 2 1,2-benzoquinone + 2 H2O. In terms of biological role, catalyzes the oxidation of mono- and o-diphenols to o-diquinones. This Solanum lycopersicum (Tomato) protein is Polyphenol oxidase C, chloroplastic.